Reading from the N-terminus, the 410-residue chain is Cysteine desulfurase IscS (410 aa).

Residues 80 to 81, Asn-160, Gln-188, and 208 to 210 contribute to the pyridoxal 5'-phosphate site; these read AT and SGH. Lys-211 carries the N6-(pyridoxal phosphate)lysine modification. Thr-248 serves as a coordination point for pyridoxal 5'-phosphate. The active-site Cysteine persulfide intermediate is the Cys-334. Cys-334 serves as a coordination point for [2Fe-2S] cluster.

Belongs to the class-V pyridoxal-phosphate-dependent aminotransferase family. NifS/IscS subfamily. As to quaternary structure, homodimer. Forms a heterotetramer with IscU, interacts with other sulfur acceptors. Pyridoxal 5'-phosphate serves as cofactor.

The protein resides in the cytoplasm. The enzyme catalyses (sulfur carrier)-H + L-cysteine = (sulfur carrier)-SH + L-alanine. The protein operates within cofactor biosynthesis; iron-sulfur cluster biosynthesis. Functionally, master enzyme that delivers sulfur to a number of partners involved in Fe-S cluster assembly, tRNA modification or cofactor biosynthesis. Catalyzes the removal of elemental sulfur atoms from cysteine to produce alanine. Functions as a sulfur delivery protein for Fe-S cluster synthesis onto IscU, an Fe-S scaffold assembly protein, as well as other S acceptor proteins. This is Cysteine desulfurase IscS from Rickettsia africae (strain ESF-5).